A 326-amino-acid chain; its full sequence is Zinc-dependent endopolyphosphatase (326 aa).

The Cytoplasmic portion of the chain corresponds to 1-9 (MEDKRKRRA). The chain crosses the membrane as a helical span at residues 10 to 30 (ATLSTALILFVACCVYTLYIF). At 31–326 (KFDNPRLSPP…DYELIQVQCS (296 aa)) the chain is on the vacuolar side. N90 and N241 each carry an N-linked (GlcNAc...) asparagine glycan.

It belongs to the metallophosphoesterase superfamily. As to quaternary structure, interacts with PPN1. The cofactor is Zn(2+). It depends on Co(2+) as a cofactor. Mg(2+) serves as cofactor.

The protein localises to the vacuole membrane. It carries out the reaction [phosphate](n+1) + n H2O = (n+1) phosphate + n H(+). With respect to regulation, not sensitive to heparin inhibition. Catalyzes the hydrolysis of inorganic polyphosphate (polyP) chains of many hundreds of phosphate residues into shorter lengths. Exclusively shows endopolyphosphatase activity, cleaving inside the polyP chain. Together with PPN1, responsible for a substantial fraction of polyphosphatase activity that is necessary to mobilize polyP stores in response to phosphate scarcity. The chain is Zinc-dependent endopolyphosphatase from Saccharomyces cerevisiae (strain ATCC 204508 / S288c) (Baker's yeast).